The sequence spans 697 residues: Probable glutamine--tRNA ligase (697 aa).

The short motif at 204-214 (PEPNGILHIGH) is the 'HIGH' region element. Residues 205–207 (EPN) and 211–217 (HIGHAKA) each bind ATP. Residues Asp-237 and Tyr-386 each coordinate L-glutamine. ATP is bound by residues Thr-405, 434-435 (RL), and 442-444 (LSK). Positions 441–445 (VLSKR) match the 'KMSKS' region motif.

Belongs to the class-I aminoacyl-tRNA synthetase family.

The enzyme catalyses tRNA(Gln) + L-glutamine + ATP = L-glutaminyl-tRNA(Gln) + AMP + diphosphate. In Encephalitozoon cuniculi (strain GB-M1) (Microsporidian parasite), this protein is Probable glutamine--tRNA ligase.